The chain runs to 338 residues: RNA 3'-terminal phosphate cyclase (338 aa).

Residues Gln-103 and 283–287 contribute to the ATP site; that span reads YLADQ. His-308 (tele-AMP-histidine intermediate) is an active-site residue.

Belongs to the RNA 3'-terminal cyclase family. Type 1 subfamily.

The protein resides in the cytoplasm. The enzyme catalyses a 3'-end 3'-phospho-ribonucleotide-RNA + ATP = a 3'-end 2',3'-cyclophospho-ribonucleotide-RNA + AMP + diphosphate. Its function is as follows. Catalyzes the conversion of 3'-phosphate to a 2',3'-cyclic phosphodiester at the end of RNA. The mechanism of action of the enzyme occurs in 3 steps: (A) adenylation of the enzyme by ATP; (B) transfer of adenylate to an RNA-N3'P to produce RNA-N3'PP5'A; (C) and attack of the adjacent 2'-hydroxyl on the 3'-phosphorus in the diester linkage to produce the cyclic end product. The biological role of this enzyme is unknown but it is likely to function in some aspects of cellular RNA processing. This chain is RNA 3'-terminal phosphate cyclase, found in Escherichia coli O6:H1 (strain CFT073 / ATCC 700928 / UPEC).